We begin with the raw amino-acid sequence, 101 residues long: Small ribosomal subunit protein uS14 (101 aa).

Belongs to the universal ribosomal protein uS14 family. Part of the 30S ribosomal subunit. Contacts proteins S3 and S10.

Binds 16S rRNA, required for the assembly of 30S particles and may also be responsible for determining the conformation of the 16S rRNA at the A site. The sequence is that of Small ribosomal subunit protein uS14 from Caulobacter vibrioides (strain ATCC 19089 / CIP 103742 / CB 15) (Caulobacter crescentus).